A 212-amino-acid polypeptide reads, in one-letter code: ER lumen protein-retaining receptor 1 (212 aa).

Over 1-4 (MNLF) the chain is Lumenal. The helical transmembrane segment at 5–24 (RFLGDLSHLLAIILLLLKIW) threads the bilayer. Residues 25–32 (KSRSCAGI) lie on the Cytoplasmic side of the membrane. A helical membrane pass occupies residues 33–52 (SGKSQVLFAVVFTARYLDLF). Residues 47–48 (RY) are interaction with the K-D-E-L motif on target proteins. Residues 53–58 (TNYISL) lie on the Lumenal side of the membrane. Residues 59-79 (YNTCMKVVYIACSFTTVWMIY) form a helical membrane-spanning segment. Topologically, residues 80–92 (SKFKATYDGNHDT) are cytoplasmic. Residues 93–110 (FRVEFLVVPTAILAFLVN) traverse the membrane as a helical segment. Residues 111–116 (HDFTPL) are Lumenal-facing. The helical transmembrane segment at 117-135 (EILWTFSIYLESVAILPQL) threads the bilayer. Topologically, residues 136–149 (FMVSKTGEAETITS) are cytoplasmic. A helical membrane pass occupies residues 150 to 168 (HYLFALGVYRTLYLFNWIW). Residues 159-169 (RTLYLFNWIWR) are interaction with the K-D-E-L motif on target proteins. Residues 169–178 (RYHFEGFFDL) lie on the Lumenal side of the membrane. Residues 179–199 (IAIVAGLVQTVLYCDFFYLYI) traverse the membrane as a helical segment. The Cytoplasmic portion of the chain corresponds to 200–212 (TKVLKGKKLSLPA). Residues 204–207 (KGKK) are important for recycling of cargo proteins with the sequence motif K-D-E-L from the Golgi to the endoplasmic reticulum. Ser209 is modified (phosphoserine; by PKA).

It belongs to the ERD2 family. As to quaternary structure, upon ligand binding the receptor oligomerizes and interacts with components of the transport machinery such as ARFGAP1 and ARF1. Phosphorylation by PKA at Ser-209 is required for endoplasmic reticulum retention function.

Its subcellular location is the golgi apparatus membrane. It is found in the cytoplasmic vesicle. The protein resides in the COPI-coated vesicle membrane. The protein localises to the endoplasmic reticulum membrane. It localises to the endoplasmic reticulum-Golgi intermediate compartment membrane. Its function is as follows. Receptor for the C-terminal sequence motif K-D-E-L that is present on endoplasmic reticulum resident proteins and that mediates their recycling from the Golgi back to the endoplasmic reticulum. In Mus musculus (Mouse), this protein is ER lumen protein-retaining receptor 1 (Kdelr1).